Consider the following 244-residue polypeptide: 23S rRNA (guanosine-2'-O-)-methyltransferase RlmB (244 aa).

Positions 196, 216, and 225 each coordinate S-adenosyl-L-methionine.

The protein belongs to the class IV-like SAM-binding methyltransferase superfamily. RNA methyltransferase TrmH family. RlmB subfamily. As to quaternary structure, homodimer.

It localises to the cytoplasm. It carries out the reaction guanosine(2251) in 23S rRNA + S-adenosyl-L-methionine = 2'-O-methylguanosine(2251) in 23S rRNA + S-adenosyl-L-homocysteine + H(+). Its function is as follows. Specifically methylates the ribose of guanosine 2251 in 23S rRNA. This Pectobacterium atrosepticum (strain SCRI 1043 / ATCC BAA-672) (Erwinia carotovora subsp. atroseptica) protein is 23S rRNA (guanosine-2'-O-)-methyltransferase RlmB.